A 453-amino-acid polypeptide reads, in one-letter code: Ribosomal protein uS12 methylthiotransferase RimO (453 aa).

The 116-residue stretch at 9-124 folds into the MTTase N-terminal domain; it reads PKVGFVSLGC…VMEAVHTHLP (116 aa). Cysteine 18, cysteine 54, cysteine 83, cysteine 155, cysteine 159, and cysteine 162 together coordinate [4Fe-4S] cluster. One can recognise a Radical SAM core domain in the interval 141 to 382; sequence LTPKHYAYLK…MEVAERVSAR (242 aa). The 69-residue stretch at 385–453 folds into the TRAM domain; sequence QRKVGKSLRV…ADGHDLWGEV (69 aa).

Belongs to the methylthiotransferase family. RimO subfamily. The cofactor is [4Fe-4S] cluster.

It localises to the cytoplasm. It catalyses the reaction L-aspartate(89)-[ribosomal protein uS12]-hydrogen + (sulfur carrier)-SH + AH2 + 2 S-adenosyl-L-methionine = 3-methylsulfanyl-L-aspartate(89)-[ribosomal protein uS12]-hydrogen + (sulfur carrier)-H + 5'-deoxyadenosine + L-methionine + A + S-adenosyl-L-homocysteine + 2 H(+). Its function is as follows. Catalyzes the methylthiolation of an aspartic acid residue of ribosomal protein uS12. This is Ribosomal protein uS12 methylthiotransferase RimO from Ralstonia pickettii (strain 12J).